The sequence spans 202 residues: Recombination protein RecR (202 aa).

Residues 56–71 (CVVCGTVSDKEHCRIC) form a C4-type zinc finger. The 101-residue stretch at 79–179 (TVICVVEEPK…TVSRLASGLP (101 aa)) folds into the Toprim domain.

It belongs to the RecR family.

Functionally, may play a role in DNA repair. It seems to be involved in an RecBC-independent recombinational process of DNA repair. It may act with RecF and RecO. The protein is Recombination protein RecR of Rhodococcus jostii (strain RHA1).